A 695-amino-acid chain; its full sequence is Centrosomal protein kizuna (695 aa).

Positions 1–12 (MPRGRGGGGGGL) are enriched in gly residues. Residues 1 to 24 (MPRGRGGGGGGLRQASATSAPLAS) form a disordered region. A compositionally biased stretch (low complexity) spans 15-24 (ASATSAPLAS). Coiled-coil stretches lie at residues 29-57 (ERVG…EYNK) and 102-132 (VEHL…LSKD). Disordered stretches follow at residues 261 to 313 (EIGS…SDRE), 351 to 391 (HSAW…SDLT), 444 to 465 (QSFP…EKVP), and 633 to 695 (SEAS…FYDT). 2 stretches are compositionally biased toward polar residues: residues 263 to 274 (GSSTQHSKSNLS) and 282 to 297 (LHSS…NSIT). Composition is skewed to basic and acidic residues over residues 299–313 (LKCD…SDRE) and 360–377 (DLDH…KHEE). Residues 382–391 (GSSCSSSDLT) show a composition bias toward low complexity. Phosphothreonine; by PLK1 is present on T391. The segment covering 448–465 (DSKREPSPDSPRQPEKVP) has biased composition (basic and acidic residues). The segment covering 633-645 (SEASFSSSEGSPL) has biased composition (low complexity). Phosphoserine is present on residues S667, S670, and S672. Positions 676–686 (AALRPRDHDMP) are enriched in basic and acidic residues.

It belongs to the kizuna family. Interacts with AKAP9, CEP72, ODF2, PCNT and TUBGCP2. In terms of processing, phosphorylation at Thr-391 by PLK1 is not needed for centrosomal localization or pericentriolar material expansion but is indispensable for spindle-pole stabilization.

Its subcellular location is the cytoplasm. The protein resides in the cytoskeleton. It is found in the microtubule organizing center. It localises to the centrosome. The protein localises to the cilium basal body. Functionally, centrosomal protein required for establishing a robust mitotic centrosome architecture that can endure the forces that converge on the centrosomes during spindle formation. Required for stabilizing the expanded pericentriolar material around the centriole. This Mus musculus (Mouse) protein is Centrosomal protein kizuna (Kiz).